The sequence spans 190 residues: Peptidyl-prolyl cis-trans isomerase A (190 aa).

The N-terminal stretch at 1–24 (MLKSTLAAVAAVFALSALSPAALA) is a signal peptide. The 162-residue stretch at 27-188 (GDPHVLLTTS…KPVVILSAKV (162 aa)) folds into the PPIase cyclophilin-type domain.

It belongs to the cyclophilin-type PPIase family.

The protein resides in the periplasm. It carries out the reaction [protein]-peptidylproline (omega=180) = [protein]-peptidylproline (omega=0). In terms of biological role, PPIases accelerate the folding of proteins. It catalyzes the cis-trans isomerization of proline imidic peptide bonds in oligopeptides. In Salmonella typhimurium (strain LT2 / SGSC1412 / ATCC 700720), this protein is Peptidyl-prolyl cis-trans isomerase A (ppiA).